Consider the following 183-residue polypeptide: MILLLTNSKIIYPYSEALFSIAKDQEKFEVIKNDMELFVTFTKNLNGFKKFLETPLINKNKKIKVVKDVFSKILNSTTLNFISILINKNRIMFVSNISEKYNQLVLKDKSVKLVKIACARQLSEKQAQALSEVLKHKFKCLSVKLIFNIEPELIAGFKIFIESQVIDVSLQGELKEFEWYLTK.

Belongs to the ATPase delta chain family. In terms of assembly, F-type ATPases have 2 components, F(1) - the catalytic core - and F(0) - the membrane proton channel. F(1) has five subunits: alpha(3), beta(3), gamma(1), delta(1), epsilon(1). CF(0) has four main subunits: a(1), b(1), b'(1) and c(10-14). The alpha and beta chains form an alternating ring which encloses part of the gamma chain. F(1) is attached to F(0) by a central stalk formed by the gamma and epsilon chains, while a peripheral stalk is formed by the delta, b and b' chains.

The protein localises to the plastid. It localises to the chloroplast thylakoid membrane. F(1)F(0) ATP synthase produces ATP from ADP in the presence of a proton or sodium gradient. F-type ATPases consist of two structural domains, F(1) containing the extramembraneous catalytic core and F(0) containing the membrane proton channel, linked together by a central stalk and a peripheral stalk. During catalysis, ATP synthesis in the catalytic domain of F(1) is coupled via a rotary mechanism of the central stalk subunits to proton translocation. Its function is as follows. This protein is part of the stalk that links CF(0) to CF(1). It either transmits conformational changes from CF(0) to CF(1) or is implicated in proton conduction. In Cyanidium caldarium (Red alga), this protein is ATP synthase subunit delta, chloroplastic.